We begin with the raw amino-acid sequence, 278 residues long: Replication protein A 32 kDa subunit B (278 aa).

Positions 70–143 (VVIVGRISRM…RSVNVFSVRP (74 aa)) form a DNA-binding region, OB.

This sequence belongs to the replication factor A protein 2 family. As to quaternary structure, heterotrimer of RPA1, RPA2 and RPA3 (canonical replication protein A complex). Phosphorylated in a cell-cycle-dependent manner (from the S phase until mitosis). In response to DNA damage, recruited to DNA-repair nuclear foci, as a hypophosphorylated form.

Its subcellular location is the nucleus. Its function is as follows. Component of the replication protein A complex (RPA) required for DNA recombination, repair and replication. The activity of RPA is mediated by single-stranded DNA binding and protein interactions. Required fo cell division in meristems. Involved in the maintenance of transcriptional epigenetic gene silencing (TGS) at specific loci (including some transposons) by regulating histone H3 acetylation, 'Lys-4' and 'Lys-9' methylation. The sequence is that of Replication protein A 32 kDa subunit B (RPA2B) from Arabidopsis thaliana (Mouse-ear cress).